Consider the following 494-residue polypeptide: Glycerol kinase (494 aa).

Threonine 12 lines the ADP pocket. ATP-binding residues include threonine 12, threonine 13, and serine 14. Residue threonine 12 coordinates sn-glycerol 3-phosphate. Arginine 16 contacts ADP. Residues arginine 82, glutamate 83, tyrosine 134, and aspartate 241 each contribute to the sn-glycerol 3-phosphate site. Residues arginine 82, glutamate 83, tyrosine 134, aspartate 241, and glutamine 242 each coordinate glycerol. Threonine 263 and glycine 306 together coordinate ADP. ATP-binding residues include threonine 263, glycine 306, glutamine 310, and glycine 407. Glycine 407 serves as a coordination point for ADP.

This sequence belongs to the FGGY kinase family.

The catalysed reaction is glycerol + ATP = sn-glycerol 3-phosphate + ADP + H(+). It participates in polyol metabolism; glycerol degradation via glycerol kinase pathway; sn-glycerol 3-phosphate from glycerol: step 1/1. Its activity is regulated as follows. Inhibited by fructose 1,6-bisphosphate (FBP). Key enzyme in the regulation of glycerol uptake and metabolism. Catalyzes the phosphorylation of glycerol to yield sn-glycerol 3-phosphate. This Brachyspira hyodysenteriae (strain ATCC 49526 / WA1) protein is Glycerol kinase.